A 411-amino-acid chain; its full sequence is NADH-quinone oxidoreductase subunit D (411 aa).

It belongs to the complex I 49 kDa subunit family. As to quaternary structure, NDH-1 is composed of 14 different subunits. Subunits NuoB, C, D, E, F, and G constitute the peripheral sector of the complex.

The protein resides in the cell inner membrane. The catalysed reaction is a quinone + NADH + 5 H(+)(in) = a quinol + NAD(+) + 4 H(+)(out). Functionally, NDH-1 shuttles electrons from NADH, via FMN and iron-sulfur (Fe-S) centers, to quinones in the respiratory chain. The immediate electron acceptor for the enzyme in this species is believed to be ubiquinone. Couples the redox reaction to proton translocation (for every two electrons transferred, four hydrogen ions are translocated across the cytoplasmic membrane), and thus conserves the redox energy in a proton gradient. This is NADH-quinone oxidoreductase subunit D from Phenylobacterium zucineum (strain HLK1).